The primary structure comprises 132 residues: Small ribosomal subunit protein uS8 (132 aa).

It belongs to the universal ribosomal protein uS8 family. Part of the 30S ribosomal subunit. Contacts proteins S5 and S12.

One of the primary rRNA binding proteins, it binds directly to 16S rRNA central domain where it helps coordinate assembly of the platform of the 30S subunit. This chain is Small ribosomal subunit protein uS8, found in Chelativorans sp. (strain BNC1).